A 711-amino-acid chain; its full sequence is Toxin RTX-III translocation ATP-binding protein (711 aa).

The 129-residue stretch at 1–129 folds into the Peptidase C39 domain; sequence MESQMPFNEK…EIFQGGMILI (129 aa). His-87 is an active-site residue. Residues 158–440 form the ABC transmembrane type-1 domain; it reads FVETIIVSIF…LAQLWQDFQQ (283 aa). 5 consecutive transmembrane segments (helical) span residues 162 to 182, 195 to 215, 273 to 293, 299 to 319, and 392 to 412; these read IIVSIFLQLFALITPLFFQVV, LNVITVALSVVVIFEIVLSGL, ALTSVLDLLFSFIFFAVMWYY, IVILLSLPCYIAWSIFISPIL, and VMIINLWLGAHLVISGDLSIG. The ABC transporter domain occupies 472 to 707; that stretch reads IAFKHIRFRY…ENGLYYYLNQ (236 aa). 506-513 is an ATP binding site; sequence GRSGSGKS.

Belongs to the ABC transporter superfamily. Protein-1 exporter (TC 3.A.1.109) family. As to quaternary structure, homodimer.

Its subcellular location is the cell membrane. Its function is as follows. Involved in the transport of the toxin RTX-III. This chain is Toxin RTX-III translocation ATP-binding protein (apxIIIB), found in Actinobacillus pleuropneumoniae (Haemophilus pleuropneumoniae).